Consider the following 216-residue polypeptide: Urease operon 23 kDa accessory protein (216 aa).

In terms of biological role, involved in the expression of hydrogenase activity. May be a regulatory gene affecting the expression of the hydrogenase operon or could be involved in the process of nickel incorporation into the hydrogenase apoenzyme. This is Urease operon 23 kDa accessory protein from Rhizobium meliloti (strain 1021) (Ensifer meliloti).